The following is a 589-amino-acid chain: Multidrug transporter FLR2 (589 aa).

The tract at residues 50 to 116 (KEEMKQDNQT…SSTKDASKPE (67 aa)) is disordered. The span at 56–73 (DNQTSTDSMSTSTQQETD) shows a compositional bias: low complexity. Asn57 carries N-linked (GlcNAc...) asparagine glycosylation. The segment covering 107–116 (SSTKDASKPE) has biased composition (basic and acidic residues). Asn136 is a glycosylation site (N-linked (GlcNAc...) asparagine). The next 12 membrane-spanning stretches (helical) occupy residues 143 to 163 (TFVIVQLMVLTCINYMGSSIY), 179 to 199 (VVGTLNLSMYVLGYAIGPIIF), 211 to 231 (MPLYLWTFILFTILQVACALV), 234 to 254 (IAGLVILRFITGILCSPVLAT), 275 to 295 (WAVGAVAAPVMAPILGAAMVV), 301 to 321 (WIFWLMLFMCGATLLSIIFFF), 378 to 398 (PIILAFDVYIALCYGAFYLFF), 417 to 437 (GLAFLGFCVGCVFAYTALIIF), 455 to 475 (LFLILAMCLGWCLPFSLFFFG), 480 to 500 (IHWILPIIAELFFVLSVFNLF), 516 to 536 (ASVFAGNGLCRGAFAAAFPLF), and 551 to 571 (VAWGSTLIGFITVVLSLIPFV).

This sequence belongs to the major facilitator superfamily.

The protein localises to the cell membrane. Multidrug transporter that confers resistance to 5-flucytosine (5-FC) and clotrimazole. Further confers azole drug resistance. Plays direct roles in extrusion of 5-flucytosine and clotrimazole. The chain is Multidrug transporter FLR2 from Candida glabrata (strain ATCC 2001 / BCRC 20586 / JCM 3761 / NBRC 0622 / NRRL Y-65 / CBS 138) (Yeast).